A 293-amino-acid chain; its full sequence is tRNA pseudouridine synthase B (293 aa).

Asp-39 acts as the Nucleophile in catalysis.

It belongs to the pseudouridine synthase TruB family. Type 1 subfamily.

The enzyme catalyses uridine(55) in tRNA = pseudouridine(55) in tRNA. Responsible for synthesis of pseudouridine from uracil-55 in the psi GC loop of transfer RNAs. The protein is tRNA pseudouridine synthase B of Rickettsia bellii (strain OSU 85-389).